We begin with the raw amino-acid sequence, 485 residues long: MTITPQNLIALLPLLIVGLTVVVVMLSIAWRRNHFLNATLSVIGLNAALVSLWFVGQAGAMDVTPLMRVDGFAMLYTGLVLLASLATCTFAYPWLEGYNDNKDEFYLLVLIAALGGILLANANHLASLFLGIELISLPLFGLVGYAFRQKRSLEASIKYTILSAAASSFLLFGMALVYAQSGDLSFVALGKNLGDGMLNEPLLLAGFGLMIVGLGFKLSLVPFHLWTPDVYQGAPAPVSTFLATASKIAIFGVVMRLFLYAPVGDSEAIRVVLAIIAFASIIFGNLMALSQTNIKRLLGYSSISHLGYLLVALIALQTGEMSMEAVGVYLAGYLFSSLGAFGVVSLMSSPYRGPDADSLFSYRGLFWHRPILAAVMTVMMLSLAGIPMTLGFIGKFYVLAVGVQAHLWWLVGAVVVGSAIGLYYYLRVAVSLYLHAPEQPGRDAPSNWQYSAGGIVVLISALLVLVLGVWPQPLISIVRLAMPLM.

14 helical membrane passes run Leu-8 to Ile-28, Phe-35 to Val-55, Gly-71 to Ala-91, Phe-105 to Leu-125, Ser-127 to Phe-147, Tyr-159 to Ala-179, Leu-203 to Phe-223, Pro-235 to Met-255, Val-271 to Gln-291, Leu-297 to Gln-317, Val-326 to Leu-346, Ala-373 to Ile-393, Trp-408 to Val-430, and Ile-455 to Ile-475.

It belongs to the complex I subunit 2 family. As to quaternary structure, NDH-1 is composed of 13 different subunits. Subunits NuoA, H, J, K, L, M, N constitute the membrane sector of the complex.

The protein resides in the cell inner membrane. It carries out the reaction a quinone + NADH + 5 H(+)(in) = a quinol + NAD(+) + 4 H(+)(out). Its function is as follows. NDH-1 shuttles electrons from NADH, via FMN and iron-sulfur (Fe-S) centers, to quinones in the respiratory chain. The immediate electron acceptor for the enzyme in this species is believed to be ubiquinone. Couples the redox reaction to proton translocation (for every two electrons transferred, four hydrogen ions are translocated across the cytoplasmic membrane), and thus conserves the redox energy in a proton gradient. The sequence is that of NADH-quinone oxidoreductase subunit N from Escherichia coli O139:H28 (strain E24377A / ETEC).